Reading from the N-terminus, the 233-residue chain is Putative N-acetylmannosamine-6-phosphate 2-epimerase (233 aa).

This sequence belongs to the NanE family.

The catalysed reaction is an N-acyl-D-glucosamine 6-phosphate = an N-acyl-D-mannosamine 6-phosphate. The protein operates within amino-sugar metabolism; N-acetylneuraminate degradation; D-fructose 6-phosphate from N-acetylneuraminate: step 3/5. Its function is as follows. Converts N-acetylmannosamine-6-phosphate (ManNAc-6-P) to N-acetylglucosamine-6-phosphate (GlcNAc-6-P). This Yersinia pseudotuberculosis serotype O:1b (strain IP 31758) protein is Putative N-acetylmannosamine-6-phosphate 2-epimerase.